The chain runs to 173 residues: Large ribosomal subunit protein uL15 (173 aa).

Residues 1–11 (MKLNEIRDNQG) are compositionally biased toward basic and acidic residues. The tract at residues 1–50 (MKLNEIRDNQGARKSRVRVGRGIGSGLGKTGGRGQKGQKSRSGVSINGFE) is disordered. Positions 21-35 (RGIGSGLGKTGGRGQ) are enriched in gly residues.

It belongs to the universal ribosomal protein uL15 family. As to quaternary structure, part of the 50S ribosomal subunit.

In terms of biological role, binds to the 23S rRNA. The chain is Large ribosomal subunit protein uL15 from Rhizorhabdus wittichii (strain DSM 6014 / CCUG 31198 / JCM 15750 / NBRC 105917 / EY 4224 / RW1) (Sphingomonas wittichii).